A 206-amino-acid polypeptide reads, in one-letter code: Large ribosomal subunit protein uL4 (206 aa).

The tract at residues 48 to 75 is disordered; that stretch reads TQSAKTRAEVSGGGIKPWRQKGTGRARQ.

Belongs to the universal ribosomal protein uL4 family. As to quaternary structure, part of the 50S ribosomal subunit.

One of the primary rRNA binding proteins, this protein initially binds near the 5'-end of the 23S rRNA. It is important during the early stages of 50S assembly. It makes multiple contacts with different domains of the 23S rRNA in the assembled 50S subunit and ribosome. Functionally, forms part of the polypeptide exit tunnel. The sequence is that of Large ribosomal subunit protein uL4 from Clostridium botulinum (strain Loch Maree / Type A3).